Here is a 113-residue protein sequence, read N- to C-terminus: Antisense of depressing factor protein 1 (113 aa).

Residues 1 to 11 (MGKCSMKKKGV) are compositionally biased toward basic residues. The tract at residues 1–35 (MGKCSMKKKGVGKNVGVGKKVQKKRSISTAERKRT) is disordered.

Belongs to the ADF1 family.

It localises to the nucleus. Transcriptional repressor which negatively regulates transcription of FYV5 by binding to the promoter on the sense strand. The sequence is that of Antisense of depressing factor protein 1 from Saccharomyces cerevisiae (strain ATCC 204508 / S288c) (Baker's yeast).